The primary structure comprises 439 residues: Serine hydroxymethyltransferase (439 aa).

Residues Leu-134 and 138-140 contribute to the (6S)-5,6,7,8-tetrahydrofolate site; that span reads GHL. Position 243 is an N6-(pyridoxal phosphate)lysine (Lys-243).

Belongs to the SHMT family. As to quaternary structure, homodimer. The cofactor is pyridoxal 5'-phosphate.

The protein localises to the cytoplasm. It catalyses the reaction (6R)-5,10-methylene-5,6,7,8-tetrahydrofolate + glycine + H2O = (6S)-5,6,7,8-tetrahydrofolate + L-serine. The protein operates within one-carbon metabolism; tetrahydrofolate interconversion. It participates in amino-acid biosynthesis; glycine biosynthesis; glycine from L-serine: step 1/1. In terms of biological role, catalyzes the reversible interconversion of serine and glycine with tetrahydrofolate (THF) serving as the one-carbon carrier. This reaction serves as the major source of one-carbon groups required for the biosynthesis of purines, thymidylate, methionine, and other important biomolecules. Also exhibits THF-independent aldolase activity toward beta-hydroxyamino acids, producing glycine and aldehydes, via a retro-aldol mechanism. The protein is Serine hydroxymethyltransferase of Brucella anthropi (strain ATCC 49188 / DSM 6882 / CCUG 24695 / JCM 21032 / LMG 3331 / NBRC 15819 / NCTC 12168 / Alc 37) (Ochrobactrum anthropi).